Consider the following 617-residue polypeptide: ATP-dependent rRNA helicase SPB4 (617 aa).

The Q motif signature appears at 7–35 (WADLDYELQPWIKKAINVSGFDSMTPVQA). A Helicase ATP-binding domain is found at 38–224 (IPMFAKNKDV…KTGLRNPVKI (187 aa)). ATP is bound at residue 51-58 (SVTGSGKT). Positions 172 to 175 (DEAD) match the DEAD box motif. The Helicase C-terminal domain occupies 252-406 (NLIHIMNNIR…ETDINKNKIS (155 aa)).

This sequence belongs to the DEAD box helicase family. DDX55/SPB4 subfamily. Component of pre-60S ribosomal complexes.

Its subcellular location is the nucleus. It is found in the nucleolus. It carries out the reaction ATP + H2O = ADP + phosphate + H(+). In terms of biological role, ATP-binding RNA helicase involved in the biogenesis of 60S ribosomal subunits. Binds 90S pre-ribosomal particles and dissociates from pre-60S ribosomal particles after processing of 27SB pre-rRNA. Required for the normal formation of 18S rRNA through the processing of pre-rRNAs at sites A0, A1 and A2, and the normal formation of 25S and 5.8S rRNAs through the processing of pre-rRNAs at sites C1 and C2. The chain is ATP-dependent rRNA helicase SPB4 from Candida glabrata (strain ATCC 2001 / BCRC 20586 / JCM 3761 / NBRC 0622 / NRRL Y-65 / CBS 138) (Yeast).